Reading from the N-terminus, the 643-residue chain is MSKPSSSPFFSETTSRLQDETVFFSLFPDSSLSSAALQSLHLEIIDFVSPFTSPYIWQHEPFSLSIALSSSCACTNTAIPHLHGKLKYGDNLEDEWFAVFLLFRISAAFPSNSIRVWDTDGEFLLIEAAFHLPRWLNPETSLNRVFIRGGDLHIVPRSRLPDPSLVASLRFLIERGNESRASDSVQSALKNRISDYPERAWRNMHRVRVRVPVSVAQVIRHEPFLISLAVEGFYDRDMDSMKHAAKMEKFLSKGREEKLVLVLVKMSRAMYGQLVQQKFQAPNCYPMPSVSDRDAFSEAELGMKIACGMEMMYQQRKKEGEDGKGISWSKYKDNLEKYGYFEGLLSGSKEYKRLMENAEEYHQKSSSFSRTRDIMSAPVRRIDEILALPYSEDDFKGQEVPASDNDSWLYDGEDELNSVLQERQKEMEFYNSKKERKNKGKEKQEAGSSSDANMNNFDLGDISKSMQQFMHKVSSYKGAEVPENRDFKEVSIDVDRFMKDIESMLGSQGRDEQADDDSDGSEGSSMDMDFDDVEDDSEGEESNEDAKESFEESYYGAMNEELKNSTLEKSFENVNQQHSSKQNEESSKTRDEKDDEFTPVDADFNLVKNLLESYSSQQGLPGPASNLLGLMGLQLPKDSGDKN.

2 disordered regions span residues 428–458 and 501–600; these read EFYNSKKERKNKGKEKQEAGSSSDANMNNFD and IESM…FTPV. The span at 446–456 shows a compositional bias: polar residues; it reads AGSSSDANMNN. The segment covering 528–543 has biased composition (acidic residues); the sequence is MDFDDVEDDSEGEESN. Positions 564 to 580 are enriched in polar residues; that stretch reads NSTLEKSFENVNQQHSS. Basic and acidic residues predominate over residues 581–592; that stretch reads KQNEESSKTRDE.

Belongs to the ECD family.

The sequence is that of Protein ecdysoneless homolog from Arabidopsis thaliana (Mouse-ear cress).